Consider the following 520-residue polypeptide: GMP synthase [glutamine-hydrolyzing] (520 aa).

A Glutamine amidotransferase type-1 domain is found at 8–202 (RLLIIDFGSQ…FVRLAGFTGD (195 aa)). Cys86 functions as the Nucleophile in the catalytic mechanism. Residues His177 and Glu179 contribute to the active site. A GMPS ATP-PPase domain is found at 203 to 395 (WTMDAYREQA…LGLPASFIGR (193 aa)). 230 to 236 (SGGVDSS) contacts ATP.

In terms of assembly, homodimer.

It catalyses the reaction XMP + L-glutamine + ATP + H2O = GMP + L-glutamate + AMP + diphosphate + 2 H(+). The protein operates within purine metabolism; GMP biosynthesis; GMP from XMP (L-Gln route): step 1/1. Its function is as follows. Catalyzes the synthesis of GMP from XMP. This Dinoroseobacter shibae (strain DSM 16493 / NCIMB 14021 / DFL 12) protein is GMP synthase [glutamine-hydrolyzing].